A 330-amino-acid chain; its full sequence is Anthranilate phosphoribosyltransferase (330 aa).

Residues Gly77, 80–81 (GD), Thr85, 87–90 (NIST), 105–113 (KHGNKAVSS), and Ser117 each bind 5-phospho-alpha-D-ribose 1-diphosphate. Gly77 contributes to the anthranilate binding site. Ser89 is a Mg(2+) binding site. Asn108 provides a ligand contact to anthranilate. Arg163 contacts anthranilate. Asp222 and Glu223 together coordinate Mg(2+).

It belongs to the anthranilate phosphoribosyltransferase family. In terms of assembly, homodimer. Requires Mg(2+) as cofactor.

It carries out the reaction N-(5-phospho-beta-D-ribosyl)anthranilate + diphosphate = 5-phospho-alpha-D-ribose 1-diphosphate + anthranilate. It functions in the pathway amino-acid biosynthesis; L-tryptophan biosynthesis; L-tryptophan from chorismate: step 2/5. Functionally, catalyzes the transfer of the phosphoribosyl group of 5-phosphorylribose-1-pyrophosphate (PRPP) to anthranilate to yield N-(5'-phosphoribosyl)-anthranilate (PRA). This chain is Anthranilate phosphoribosyltransferase, found in Pelagibacter ubique (strain HTCC1062).